The primary structure comprises 81 residues: ATP synthase subunit c (81 aa).

2 helical membrane-spanning segments follow: residues 7-27 and 53-73; these read FVAL…CIGI and FLLA…AMMF.

It belongs to the ATPase C chain family. F-type ATPases have 2 components, F(1) - the catalytic core - and F(0) - the membrane proton channel. F(1) has five subunits: alpha(3), beta(3), gamma(1), delta(1), epsilon(1). F(0) has three main subunits: a(1), b(2) and c(10-14). The alpha and beta chains form an alternating ring which encloses part of the gamma chain. F(1) is attached to F(0) by a central stalk formed by the gamma and epsilon chains, while a peripheral stalk is formed by the delta and b chains.

The protein localises to the cell inner membrane. F(1)F(0) ATP synthase produces ATP from ADP in the presence of a proton or sodium gradient. F-type ATPases consist of two structural domains, F(1) containing the extramembraneous catalytic core and F(0) containing the membrane proton channel, linked together by a central stalk and a peripheral stalk. During catalysis, ATP synthesis in the catalytic domain of F(1) is coupled via a rotary mechanism of the central stalk subunits to proton translocation. Functionally, key component of the F(0) channel; it plays a direct role in translocation across the membrane. A homomeric c-ring of between 10-14 subunits forms the central stalk rotor element with the F(1) delta and epsilon subunits. This chain is ATP synthase subunit c, found in Azoarcus sp. (strain BH72).